The primary structure comprises 609 residues: Glutamine--fructose-6-phosphate aminotransferase [isomerizing] (609 aa).

The active-site Nucleophile; for GATase activity is Cys-2. Residues 2–218 (CGIVGAVAQR…EGDVVEVTRR (217 aa)) form the Glutamine amidotransferase type-2 domain. 2 SIS domains span residues 286–426 (ADAL…LKGA) and 458–599 (LAEG…VDQP). Lys-604 (for Fru-6P isomerization activity) is an active-site residue.

Homodimer.

Its subcellular location is the cytoplasm. It carries out the reaction D-fructose 6-phosphate + L-glutamine = D-glucosamine 6-phosphate + L-glutamate. Functionally, catalyzes the first step in hexosamine metabolism, converting fructose-6P into glucosamine-6P using glutamine as a nitrogen source. The protein is Glutamine--fructose-6-phosphate aminotransferase [isomerizing] of Yersinia pestis.